A 445-amino-acid polypeptide reads, in one-letter code: Phosphoglucosamine mutase (445 aa).

The Phosphoserine intermediate role is filled by S99. Residues S99, D242, D244, and D246 each contribute to the Mg(2+) site. The residue at position 99 (S99) is a Phosphoserine.

This sequence belongs to the phosphohexose mutase family. It depends on Mg(2+) as a cofactor. In terms of processing, activated by phosphorylation.

The enzyme catalyses alpha-D-glucosamine 1-phosphate = D-glucosamine 6-phosphate. In terms of biological role, catalyzes the conversion of glucosamine-6-phosphate to glucosamine-1-phosphate. This chain is Phosphoglucosamine mutase, found in Helicobacter pylori (strain G27).